The following is a 120-amino-acid chain: Ubiquitin domain-containing protein TINCR (120 aa).

The Ubiquitin-like domain occupies 14–83 (YHIKVHLADE…LQDGSVLLLV (70 aa)).

In terms of tissue distribution, detected in stratum corneum (at protein level).

The polypeptide is Ubiquitin domain-containing protein TINCR (Homo sapiens (Human)).